Here is a 1191-residue protein sequence, read N- to C-terminus: Probable inositol polyphosphate 5-phosphatase C9G1.10c (1191 aa).

Polar residues-rich tracts occupy residues 1–10 (MASRQGFSNV), 72–101 (QVSSTIGSSTGRKVSGSIQRLASNFKNPSN), 114–135 (SDSSESHVATPSSPTISNSFVS), 151–161 (SFQSSVQSTKG), and 181–193 (NFSSKAGSSSPIS). Residues 1–193 (MASRQGFSNV…SKAGSSSPIS (193 aa)) are disordered. Residue Ser195 is modified to Phosphoserine. Disordered stretches follow at residues 205–281 (SQSP…PQPV), 294–334 (SQQL…DASL), and 355–425 (IPEK…SSSS). Over residues 268–280 (TPPPIPSPRPPQP) the composition is skewed to pro residues. The segment covering 302–311 (SPRKPPKPPL) has biased composition (basic residues). 3 stretches are compositionally biased toward polar residues: residues 316–334 (TQRSSSPIENLATKSDASL), 367–382 (HTLSELSSPALTSENL), and 400–413 (LATNKPVSMPVSTE). Residues 414–425 (QSDPSVAASSSS) are compositionally biased toward low complexity.

It belongs to the inositol 1,4,5-trisphosphate 5-phosphatase family.

The protein resides in the cytoplasm. The polypeptide is Probable inositol polyphosphate 5-phosphatase C9G1.10c (Schizosaccharomyces pombe (strain 972 / ATCC 24843) (Fission yeast)).